The following is a 137-amino-acid chain: Phosphatidylinositol N-acetylglucosaminyltransferase subunit P (137 aa).

The next 2 helical transmembrane spans lie at 16 to 36 (VYGF…LIWG) and 58 to 78 (MAMP…YIGL).

Belongs to the PIGP family.

It localises to the membrane. It catalyses the reaction a 1,2-diacyl-sn-glycero-3-phospho-(1D-myo-inositol) + UDP-N-acetyl-alpha-D-glucosamine = a 6-(N-acetyl-alpha-D-glucosaminyl)-1-(1,2-diacyl-sn-glycero-3-phospho)-1D-myo-inositol + UDP + H(+). It functions in the pathway glycolipid biosynthesis; glycosylphosphatidylinositol-anchor biosynthesis. In terms of biological role, part of the complex catalyzing the transfer of N-acetylglucosamine from UDP-N-acetylglucosamine to phosphatidylinositol, the first step of GPI biosynthesis. This is Phosphatidylinositol N-acetylglucosaminyltransferase subunit P from Arabidopsis thaliana (Mouse-ear cress).